A 155-amino-acid polypeptide reads, in one-letter code: RING finger protein 122 (155 aa).

The chain crosses the membrane as a helical span at residues 40-60 (VIFGTGIFVFMLSLIFCCYFI). Residues 93–134 (CAVCLEDFKGKDELGVLPCQHAFHRKCLVKWLEVRCVCPMCN) form an RING-type; atypical zinc finger.

The protein localises to the golgi apparatus. Its subcellular location is the endoplasmic reticulum. The protein resides in the membrane. In terms of biological role, may induce necrosis and apoptosis. May play a role in cell viability. In Mus musculus (Mouse), this protein is RING finger protein 122 (Rnf122).